Reading from the N-terminus, the 333-residue chain is Atrochrysone carboxyl ACP thioesterase MYCFIDRAFT_190111 (333 aa).

Positions 108, 110, 112, and 113 each coordinate Zn(2+). Asp112 functions as the Proton donor/acceptor in the catalytic mechanism.

The protein belongs to the metallo-beta-lactamase superfamily. Requires Zn(2+) as cofactor.

The catalysed reaction is atrochrysone carboxyl-[ACP] + H2O = atrochrysone carboxylate + holo-[ACP] + H(+). The protein operates within secondary metabolite biosynthesis. In terms of biological role, atrochrysone carboxyl ACP thioesterase; part of the gene cluster that mediates the biosynthesis of an emodin derivative that may be involved in black Sigatoka disease of banana. The pathway begins with the synthesis of atrochrysone thioester by the polyketide synthase PKS8-1. The atrochrysone carboxyl ACP thioesterase MYCFIDRAFT_190111 then breaks the thioester bond and releases the atrochrysone carboxylic acid from PKS8-1. The decarboxylase MYCFIDRAFT_34057 then catalyzes the concerted decarboxylation-elimination required to convert atochrysone carboxylic acid into emodin anthrone, which is further oxidized to emodin by the anthrone oxygenase MYCFIDRAFT_34418. The functions of the other tailoring enzymes as well as the final product of the cluster have still to be identified. The polypeptide is Atrochrysone carboxyl ACP thioesterase MYCFIDRAFT_190111 (Pseudocercospora fijiensis (strain CIRAD86) (Black leaf streak disease fungus)).